The following is a 294-amino-acid chain: HTH-type transcriptional regulator DgdR (294 aa).

The HTH lysR-type domain occupies 14 to 70; the sequence is LEIDLLRSFVVIAEVRALSRAAARVGRTQSALSQQMKRLEDIVDQPLFQRTGRGVVL. The segment at residues 31 to 50 is a DNA-binding region (H-T-H motif); it reads LSRAAARVGRTQSALSQQMK.

This sequence belongs to the LysR transcriptional regulatory family.

In Burkholderia cepacia (Pseudomonas cepacia), this protein is HTH-type transcriptional regulator DgdR (dgdR).